A 143-amino-acid polypeptide reads, in one-letter code: Phospholipase A2 isozymes PA3A/PA3B/PA5 (143 aa).

3 residues coordinate Ca(2+): W10, G12, and G14. Intrachain disulfides connect C11–C33, C32–C72, and C39–C65. H36 is a catalytic residue. D37 contributes to the Ca(2+) binding site.

This sequence belongs to the phospholipase A2 family. Group III subfamily. The cofactor is Ca(2+). As to expression, expressed by the venom gland.

It localises to the secreted. The enzyme catalyses a 1,2-diacyl-sn-glycero-3-phosphocholine + H2O = a 1-acyl-sn-glycero-3-phosphocholine + a fatty acid + H(+). In terms of biological role, PLA2 catalyzes the calcium-dependent hydrolysis of the 2-acyl groups in 3-sn-phosphoglycerides. The protein is Phospholipase A2 isozymes PA3A/PA3B/PA5 of Heloderma suspectum (Gila monster).